We begin with the raw amino-acid sequence, 35 residues long: Photosystem II reaction center protein M (35 aa).

A helical transmembrane segment spans residues 5 to 25 (ILAFIATALFILVPTAFLLII).

Belongs to the PsbM family. PSII is composed of 1 copy each of membrane proteins PsbA, PsbB, PsbC, PsbD, PsbE, PsbF, PsbH, PsbI, PsbJ, PsbK, PsbL, PsbM, PsbT, PsbX, PsbY, PsbZ, Psb30/Ycf12, at least 3 peripheral proteins of the oxygen-evolving complex and a large number of cofactors. It forms dimeric complexes.

Its subcellular location is the plastid. It is found in the chloroplast thylakoid membrane. One of the components of the core complex of photosystem II (PSII). PSII is a light-driven water:plastoquinone oxidoreductase that uses light energy to abstract electrons from H(2)O, generating O(2) and a proton gradient subsequently used for ATP formation. It consists of a core antenna complex that captures photons, and an electron transfer chain that converts photonic excitation into a charge separation. This subunit is found at the monomer-monomer interface. The polypeptide is Photosystem II reaction center protein M (Amborella trichopoda).